Reading from the N-terminus, the 447-residue chain is ATP-dependent 6-phosphofructokinase (447 aa).

Residues glycine 88, 154–155 (RG), and 179–182 (GDGT) each bind ATP. Mg(2+) is bound at residue aspartate 180. Residues 208–210 (TVD), 253–255 (MGR), glutamate 315, and 368–371 (YIIR) contribute to the substrate site. Aspartate 210 functions as the Proton acceptor in the catalytic mechanism.

Belongs to the phosphofructokinase type A (PFKA) family. PPi-dependent PFK group II subfamily. Atypical ATP-dependent clade 'X' sub-subfamily. In terms of assembly, homodimer. It depends on Mg(2+) as a cofactor.

The protein resides in the cytoplasm. The enzyme catalyses beta-D-fructose 6-phosphate + ATP = beta-D-fructose 1,6-bisphosphate + ADP + H(+). Its pathway is carbohydrate degradation; glycolysis; D-glyceraldehyde 3-phosphate and glycerone phosphate from D-glucose: step 3/4. Catalyzes the phosphorylation of D-fructose 6-phosphate to fructose 1,6-bisphosphate by ATP, the first committing step of glycolysis. The protein is ATP-dependent 6-phosphofructokinase of Borreliella burgdorferi (strain ATCC 35210 / DSM 4680 / CIP 102532 / B31) (Borrelia burgdorferi).